A 105-amino-acid polypeptide reads, in one-letter code: MRPEPPHHENAELAAMNLEMLESQPVPEIDTLREEIDRLDAEILALVKRRAEVSKAIGKARMASGGTRLVHSREMKVIERYSELGPDGKDLAILLLRLGRGRLGH.

The 83-residue stretch at 23 to 105 (SQPVPEIDTL…LRLGRGRLGH (83 aa)) folds into the Chorismate mutase domain. Chorismate-binding residues include Arg-61, Val-70, and Glu-74.

In terms of assembly, homodimer. Interacts with AroG.

The protein localises to the cytoplasm. The enzyme catalyses chorismate = prephenate. The protein operates within metabolic intermediate biosynthesis; prephenate biosynthesis; prephenate from chorismate: step 1/1. With respect to regulation, the formation of the complex with AroG activates the chorismate mutase activity. Its function is as follows. Catalyzes the Claisen rearrangement of chorismate to prephenate. Probably involved in the aromatic amino acid biosynthesis. The chain is Intracellular chorismate mutase from Mycobacterium bovis (strain ATCC BAA-935 / AF2122/97).